Here is a 274-residue protein sequence, read N- to C-terminus: Diaminopimelate epimerase (274 aa).

Substrate-binding residues include N11, Q44, and N64. The Proton donor role is filled by C73. Substrate contacts are provided by residues 74 to 75, N157, N190, and 208 to 209; these read GN and ER. The active-site Proton acceptor is C217. 218–219 is a substrate binding site; the sequence is GS.

Belongs to the diaminopimelate epimerase family. In terms of assembly, homodimer.

The protein localises to the cytoplasm. The catalysed reaction is (2S,6S)-2,6-diaminopimelate = meso-2,6-diaminopimelate. Its pathway is amino-acid biosynthesis; L-lysine biosynthesis via DAP pathway; DL-2,6-diaminopimelate from LL-2,6-diaminopimelate: step 1/1. In terms of biological role, catalyzes the stereoinversion of LL-2,6-diaminopimelate (L,L-DAP) to meso-diaminopimelate (meso-DAP), a precursor of L-lysine and an essential component of the bacterial peptidoglycan. In Yersinia enterocolitica serotype O:8 / biotype 1B (strain NCTC 13174 / 8081), this protein is Diaminopimelate epimerase.